Here is a 439-residue protein sequence, read N- to C-terminus: Dolichyl-diphosphooligosaccharide--protein glycosyltransferase 48 kDa subunit (439 aa).

Positions 1-26 (MATRAARVWSGWWLLLLPLLGLAGAS) are cleaved as a signal peptide. Topologically, residues 27–409 (GPRTLVLLDN…QYERFIPSAY (383 aa)) are lumenal. Residues 410–430 (PYYASAFSMMLGLFIFSVVFL) form a helical membrane-spanning segment. The Cytoplasmic portion of the chain corresponds to 431–439 (HMKEKEKSD).

The protein belongs to the DDOST 48 kDa subunit family. Component of the oligosaccharyltransferase (OST) complex. OST exists in two different complex forms which contain common core subunits RPN1, RPN2, OST48, OST4, DAD1 and TMEM258, either STT3A or STT3B as catalytic subunits, and form-specific accessory subunits. STT3A complex assembly occurs through the formation of 3 subcomplexes. Subcomplex 1 contains RPN1 and TMEM258, subcomplex 2 contains the STT3A-specific subunits STT3A, DC2/OSTC, and KCP2 as well as the core subunit OST4, and subcomplex 3 contains RPN2, DAD1, and OST48. The STT3A complex can form stable complexes with the Sec61 complex or with both the Sec61 and TRAP complexes. Interacts with SMIM22.

The protein resides in the endoplasmic reticulum membrane. Its pathway is protein modification; protein glycosylation. In terms of biological role, subunit of the oligosaccharyl transferase (OST) complex that catalyzes the initial transfer of a defined glycan (Glc(3)Man(9)GlcNAc(2) in eukaryotes) from the lipid carrier dolichol-pyrophosphate to an asparagine residue within an Asn-X-Ser/Thr consensus motif in nascent polypeptide chains, the first step in protein N-glycosylation. N-glycosylation occurs cotranslationally and the complex associates with the Sec61 complex at the channel-forming translocon complex that mediates protein translocation across the endoplasmic reticulum (ER). All subunits are required for a maximal enzyme activity. Required for the assembly of both SST3A- and SS3B-containing OST complexes. The polypeptide is Dolichyl-diphosphooligosaccharide--protein glycosyltransferase 48 kDa subunit (Bos taurus (Bovine)).